A 433-amino-acid chain; its full sequence is Pyrimidine-nucleoside phosphorylase (433 aa).

81 to 83 lines the phosphate pocket; the sequence is KHS. 2 residues coordinate K(+): glycine 88 and threonine 90. Residues threonine 92, 108–110, and threonine 120 contribute to the phosphate site; that span reads KMS. The substrate site is built by arginine 168 and lysine 187. The K(+) site is built by leucine 243, alanine 246, and glutamate 255.

It belongs to the thymidine/pyrimidine-nucleoside phosphorylase family. Homodimer. K(+) serves as cofactor.

It carries out the reaction uridine + phosphate = alpha-D-ribose 1-phosphate + uracil. The enzyme catalyses thymidine + phosphate = 2-deoxy-alpha-D-ribose 1-phosphate + thymine. It catalyses the reaction 2'-deoxyuridine + phosphate = 2-deoxy-alpha-D-ribose 1-phosphate + uracil. Functionally, catalyzes phosphorolysis of the pyrimidine nucleosides uridine, thymidine and 2'-deoxyuridine with the formation of the corresponding pyrimidine base and ribose-1-phosphate. This Staphylococcus aureus (strain bovine RF122 / ET3-1) protein is Pyrimidine-nucleoside phosphorylase (pdp).